Reading from the N-terminus, the 418-residue chain is Protein-lysine 6-oxidase (418 aa).

A signal peptide spans 1-20 (MRFAWTALLGSLQLCALVRC). Positions 21–169 (APPAASHRQP…NRVEVDGMVG (149 aa)) are cleaved as a propeptide — removed by BMP1. The tract at residues 63–84 (YQPQRRRDPGATAPGAANATAP) is disordered. Low complexity predominate over residues 72–84 (GATAPGAANATAP). 3 N-linked (GlcNAc...) asparagine glycosylation sites follow: Asn-80, Asn-96, and Asn-143. Residues 130 to 175 (TSGAHDAGTSRADNQTAPGEVPTLSNLRPPNRVEVDGMVGDDPYNP) are disordered. Residues 140–157 (RADNQTAPGEVPTLSNLR) are compositionally biased toward polar residues. At Tyr-188 the chain carries Sulfotyrosine. A lysyl-oxidase like region spans residues 214–418 (PDLVPDPYYI…YASGCTISPY (205 aa)). Cystine bridges form between Cys-239-Cys-245, Cys-292-Cys-341, Cys-325-Cys-331, Cys-352-Cys-362, and Cys-399-Cys-413. Cu cation-binding residues include His-293, His-295, and His-297. A cross-link (lysine tyrosylquinone (Lys-Tyr)) is located at residues 321 to 356 (KASFCLEDTSCDYGYHRRFACTAHTQGLSPGCYDTY). A 2',4',5'-topaquinone modification is found at Tyr-356.

The protein belongs to the lysyl oxidase family. Interacts with MFAP4. Interacts (via propeptide) with EFEMP2; this interaction is strong and facilitates formation of ternary complexes with ELN during elastic fiber assembly; this interaction limits interaction of EFEMP2 with FBLN5. Cu cation is required as a cofactor. Lysine tyrosylquinone residue serves as cofactor. In terms of processing, the lysine tyrosylquinone cross-link (LTQ) is generated by condensation of the epsilon-amino group of a lysine with a topaquinone produced by oxidation of tyrosine. Proteolytically cleaved by BMP1 which removes the propeptide. Also proteolytically cleaved by ADAMTS2 and ADAMTS14, but not by ADAMTS3, at an additional cleavage site downstream of the BMP1 cleavage site. The propeptide plays a role in directing the deposition of this enzyme to elastic fibers, via interaction with tropoelastin. Cleavage by BMP1 to remove the propeptide does not increase enzymatic activity but increases binding to collagen. Cleavage by ADAMTS2 produces a form with reduced collagen-binding activity. Post-translationally, sulfated at Tyr-188 and also at either Tyr-184 or Tyr-185 which enhances binding to collagen.

The protein localises to the secreted. Its subcellular location is the extracellular space. It carries out the reaction L-lysyl-[protein] + O2 + H2O = (S)-2-amino-6-oxohexanoyl-[protein] + H2O2 + NH4(+). Responsible for the post-translational oxidative deamination of peptidyl lysine residues in precursors to fibrous collagen and elastin. Regulator of Ras expression. May play a role in tumor suppression. Plays a role in the aortic wall architecture. The protein is Protein-lysine 6-oxidase of Bos taurus (Bovine).